The following is a 164-amino-acid chain: Vesiculogenesis and immune response regulator (164 aa).

In terms of processing, could be O-mannosylated. Is likely mannosylated on Thr-61 when overexpressed in M.smegmatis.

The protein localises to the cell inner membrane. Its subcellular location is the cytoplasm. Its function is as follows. Virulence factor that regulates vesiculogenesis. Acts by regulating the production of mycobacterial membrane vesicles (MV) bearing Toll-like receptor 2 (TLR2) ligands, including the lipoproteins LpqH, a major host TLR2 agonist, and SodC. By restraining the release of most of the material that activates host cells through TLR2, VirR reduces the immunostimulant potential of M.tuberculosis and increases its virulence. May contribute to cell envelope integrity. When overexpressed in M.smegmatis, it modulates the production of IL-10, IL-12 p40 and TNF-alpha by RAW264.7 macrophages and it decreases the killing of M.smegmatis. This Mycobacterium tuberculosis (strain ATCC 25618 / H37Rv) protein is Vesiculogenesis and immune response regulator.